We begin with the raw amino-acid sequence, 161 residues long: MRCPSCSSLDTQVKDSRPTEDSAVIRRRRVCMACNFRFTTFERVQLRELTVIKRNGRRVPFDRDKLVRSVQISLRKRPVEPEKVEKMVSAIVRELESAGEAEISSEAIGEIVMEHLRKLDDVAYVRFASVYRNFREAKDFEAVLGELSGDEMARLAALRLK.

The segment covering 1 to 11 has biased composition (polar residues); it reads MRCPSCSSLDT. Positions 1-20 are disordered; the sequence is MRCPSCSSLDTQVKDSRPTE. A zinc finger lies at 3 to 34; it reads CPSCSSLDTQVKDSRPTEDSAVIRRRRVCMAC. In terms of domain architecture, ATP-cone spans 49 to 139; the sequence is LTVIKRNGRR…VYRNFREAKD (91 aa).

This sequence belongs to the NrdR family. Zn(2+) is required as a cofactor.

In terms of biological role, negatively regulates transcription of bacterial ribonucleotide reductase nrd genes and operons by binding to NrdR-boxes. In Rhodopseudomonas palustris (strain BisB18), this protein is Transcriptional repressor NrdR.